The chain runs to 163 residues: Phosphopantetheine adenylyltransferase (163 aa).

Ser-11 contacts substrate. ATP-binding positions include 11 to 12 (SF) and His-19. Substrate contacts are provided by Lys-43, Leu-75, and Arg-89. Residues 90–92 (GLR), Glu-100, and 125–131 (FGYLSSS) each bind ATP.

It belongs to the bacterial CoaD family. As to quaternary structure, homohexamer. Mg(2+) is required as a cofactor.

It is found in the cytoplasm. The catalysed reaction is (R)-4'-phosphopantetheine + ATP + H(+) = 3'-dephospho-CoA + diphosphate. It participates in cofactor biosynthesis; coenzyme A biosynthesis; CoA from (R)-pantothenate: step 4/5. Reversibly transfers an adenylyl group from ATP to 4'-phosphopantetheine, yielding dephospho-CoA (dPCoA) and pyrophosphate. This Geobacter metallireducens (strain ATCC 53774 / DSM 7210 / GS-15) protein is Phosphopantetheine adenylyltransferase.